Consider the following 233-residue polypeptide: Large ribosomal subunit protein uL1 (233 aa).

It belongs to the universal ribosomal protein uL1 family. In terms of assembly, part of the 50S ribosomal subunit.

In terms of biological role, binds directly to 23S rRNA. The L1 stalk is quite mobile in the ribosome, and is involved in E site tRNA release. Its function is as follows. Protein L1 is also a translational repressor protein, it controls the translation of the L11 operon by binding to its mRNA. The polypeptide is Large ribosomal subunit protein uL1 (Psychrobacter arcticus (strain DSM 17307 / VKM B-2377 / 273-4)).